A 562-amino-acid chain; its full sequence is Thermosome subunit alpha (562 aa).

2 disordered regions span residues 1–23 (MAQQ…TSGE) and 526–551 (GGQV…GMGG). The segment covering 537–551 (GPAGGPGGMGGGMGG) has biased composition (gly residues).

It belongs to the TCP-1 chaperonin family. Forms an oligomeric complex of eight-membered rings.

Its function is as follows. Molecular chaperone; binds unfolded polypeptides in vitro, and has a weak ATPase activity. This is Thermosome subunit alpha (thsA) from Halobacterium salinarum (strain ATCC 700922 / JCM 11081 / NRC-1) (Halobacterium halobium).